Here is an 867-residue protein sequence, read N- to C-terminus: Schizokinen transporter SchT (867 aa).

The interval 40–62 is disordered; it reads HPGKTQEAPSPTQLNTQSPAPNA. Residues 46-62 are compositionally biased toward polar residues; sequence EAPSPTQLNTQSPAPNA. The TonB box motif lies at 185–192; it reads IELVVTAT. The 111-residue stretch at 197 to 307 folds into the TBDR plug domain; sequence PIQNVPRSIT…TGGVINIITR (111 aa). The region spanning 313 to 867 is the TBDR beta-barrel domain; it reads KLTSRTEVGV…TLSIKYSFDW (555 aa). The TonB C-terminal box motif lies at 850-867; the sequence is AYAAARGRTLSIKYSFDW.

It belongs to the TonB-dependent receptor family.

The protein resides in the cell outer membrane. Its function is as follows. Involved in the TonB-dependent uptake of iron in complex with schizokinen, a dihydroxamate-type siderophore. The protein is Schizokinen transporter SchT of Nostoc sp. (strain PCC 7120 / SAG 25.82 / UTEX 2576).